Consider the following 645-residue polypeptide: E3 ubiquitin-protein ligase ORTHRUS 2 (645 aa).

The segment at 12 to 63 (DGVCMRCKSNPPPEESLTCGTCVTPWHVSCLSSPPKTLASTLQWHCPDCSGE) adopts a PHD-type zinc-finger fold. The tract at residues 96-133 (LSTEEKAKMRQRLLSGKGVEEDDEEEKRKKKGKGKNPN) is disordered. Residues 146–185 (CSFCMQLPERPVTKPCGHNACLKCFEKWMGQGKRTCGKCR) form an RING-type 1 zinc finger. The YDG domain maps to 273 to 422 (VRNQGLLVGE…FKVCRYLFVR (150 aa)). The RING-type 2 zinc finger occupies 518-575 (CQICQQVLTLPVTTPCAHNFCKACLEAKFAGKTLVRERSTGGRTLRSRKNVLNCPCCP). Residues 583 to 613 (QNPQVNREVAEVIEKLKTQEEDTAELEDEDE) adopt a coiled-coil conformation. The tract at residues 599 to 645 (KTQEEDTAELEDEDEGECSGTTPEEDSEQPKKRIKLDTDATVSATIR) is disordered. Acidic residues predominate over residues 603-625 (EDTAELEDEDEGECSGTTPEEDS). Residues 626 to 636 (EQPKKRIKLDT) show a composition bias toward basic and acidic residues.

In terms of assembly, interacts with histones CENH3, HTB2, HTR3 and H4. As to expression, mostly expressed in inflorescence and, to a lower extent, in leaves.

The protein resides in the nucleus. The catalysed reaction is S-ubiquitinyl-[E2 ubiquitin-conjugating enzyme]-L-cysteine + [acceptor protein]-L-lysine = [E2 ubiquitin-conjugating enzyme]-L-cysteine + N(6)-ubiquitinyl-[acceptor protein]-L-lysine.. It functions in the pathway protein modification; protein ubiquitination. E3 ubiquitin-protein ligase. Participates in CpG methylation-dependent transcriptional regulation and epigenetic transcriptional silencing. Mediates ubiquitination with the E2 ubiquitin-conjugating enzyme UBC11. Promotes methylation-mediated gene silencing leading, for example, to early flowering. Associates with methylated DNA, and can bind to CpG, CpNpG, and CpNpN DNA motifs, with a strong preference for methylated forms, and with highest affinity for CpG substrate. Probably acts at the DNA methylation?histone interface to maintain centromeric heterochromatin. This is E3 ubiquitin-protein ligase ORTHRUS 2 (ORTH2) from Arabidopsis thaliana (Mouse-ear cress).